The following is a 463-amino-acid chain: Chromosomal replication initiator protein DnaA (463 aa).

The tract at residues 1–84 (MNTNQIILTN…QLFQHYNNAI (84 aa)) is domain I, interacts with DnaA modulators. Residues 84-124 (IKTVEIITKELPASNQATLELPTKTFADIGSSELNSENIFS) are domain II. A domain III, AAA+ region region spans residues 125–343 (TFDIRFTFDN…GALNKVIAHS (219 aa)). Residues Gly171, Gly173, Lys174, and Thr175 each contribute to the ATP site. The interval 344-463 (NFTAKEITLE…INLMMKILQN (120 aa)) is domain IV, binds dsDNA.

This sequence belongs to the DnaA family. In terms of assembly, oligomerizes as a right-handed, spiral filament on DNA at oriC.

Its subcellular location is the cytoplasm. Plays an essential role in the initiation and regulation of chromosomal replication. ATP-DnaA binds to the origin of replication (oriC) to initiate formation of the DNA replication initiation complex once per cell cycle. Binds the DnaA box (a 9 base pair repeat at the origin) and separates the double-stranded (ds)DNA. Forms a right-handed helical filament on oriC DNA; dsDNA binds to the exterior of the filament while single-stranded (ss)DNA is stabiized in the filament's interior. The ATP-DnaA-oriC complex binds and stabilizes one strand of the AT-rich DNA unwinding element (DUE), permitting loading of DNA polymerase. After initiation quickly degrades to an ADP-DnaA complex that is not apt for DNA replication. Binds acidic phospholipids. This Rickettsia bellii (strain RML369-C) protein is Chromosomal replication initiator protein DnaA.